Here is a 358-residue protein sequence, read N- to C-terminus: Acid phosphatase (358 aa).

Residues 1–17 (MKFSTIALPLLASAALA) form the signal peptide. Residues asparagine 20, asparagine 27, and asparagine 32 are each glycosylated (N-linked (GlcNAc...) asparagine). The tract at residues 21 to 41 (SSHSGTNATSHNSTVPNENSK) is disordered. Aspartate 49, aspartate 50, and serine 81 together coordinate Mg(2+). N-linked (GlcNAc...) asparagine glycosylation is found at asparagine 92 and asparagine 145. Mg(2+) is bound at residue asparagine 156. The active site involves serine 189. Residues asparagine 199 and asparagine 278 are each glycosylated (N-linked (GlcNAc...) asparagine).

The protein belongs to the SurE nucleotidase family. The cofactor is Mg(2+).

It is found in the secreted. It carries out the reaction a phosphate monoester + H2O = an alcohol + phosphate. Probably serves to scavenge phosphorus for growing cells. The polypeptide is Acid phosphatase (PHO2) (Yarrowia lipolytica (strain CLIB 122 / E 150) (Yeast)).